A 489-amino-acid chain; its full sequence is NF-kappa-B inhibitor cactus (489 aa).

Over residues 1–26 (MPSPTKAAEAATKATATSDCSCSAAS) the composition is skewed to low complexity. Disordered regions lie at residues 1 to 138 (MPSP…SMRL) and 163 to 203 (NNLG…APPS). Serine 45 is modified (phosphoserine; by PKC). The span at 69-86 (NETSDSGFISGPQSSQIC) shows a compositional bias: polar residues. The residue at position 135 (serine 135) is a Phosphoserine; by PKC. Polar residues predominate over residues 163–180 (NNLGQSSSTQITGRSKFQ). At threonine 174 the chain carries Phosphothreonine; by PKC. Residues 181 to 203 (SSTASTANANPSGXGATSSAPPS) show a composition bias toward low complexity. ANK repeat units follow at residues 220-252 (DGDTPXHLACISGSVEVVAALIRMAPHPCLLNI), 256-285 (VAQTPLHLAALTAQPNIMRILLLAGAEVRD), 287-316 (HGNTALHLSCIAGEKQCVRALTEEFGATEI), 350-379 (DGERCVHLAAEAGHIDILRILVSHGADINA), and 384-413 (SGRTPLHIAIEGCNEDLANFLLDECEKLNL). Threonine 308 is subject to Phosphothreonine; by PKC. A Phosphoserine; by PKC modification is found at serine 384.

The protein localises to the cytoplasm. Involved in the formation of the dorsoventral pattern. It inhibits nuclear translocation of the dorsal morphogen in the dorsal region of the embryo. The protein is NF-kappa-B inhibitor cactus (cact) of Drosophila yakuba (Fruit fly).